Consider the following 68-residue polypeptide: Conotoxin Cal12.1p1 (68 aa).

A propeptide spanning residues Asp-1–Thr-23 is cleaved from the precursor.

Post-translationally, contains 4 disulfide bonds. As to expression, expressed by the venom duct.

It localises to the secreted. This Californiconus californicus (California cone) protein is Conotoxin Cal12.1p1.